The chain runs to 451 residues: MSEKEIWDKVLEIAQERISNTSYQTFIKDTQLYSLKNDEAIILVSLPFNASWLNQRYSEIMQAIIYDVIGYEVKPHFISEDELASYNNVNTQEVQEPQVQHSSIDDKTWGKEQFNMHNTFDTFVIGPGNRFPHAASLAVAEAPAEAYNPLFIYGGVGLGKTHLMHAIGHHVLSNKPNAKVIYTSSEKFTNEFIKSIRDNETEAFREKYRKIDVLLIDDIQFIQNKEQTQEEFFHTFNELHQNNKQIVISSDRPPKEIAKLEDRLRSRFEWGLIVDITPPDYETRMAILQKKIEEENLDIPPEALNYIANQIQSNIRELEGALTRLLAYSKLQGKPITTELTAEALKDIIQSPKSKKITIQDIQKIVGQYYSVRIEDFSAKKRTKSIAYPRQIAMYLSRELTDFSLPKIGEEFGGRDHTTVIHAHEKIANDIKSDPTFKQEVENLEKEIRNQ.

Positions Met1–Tyr71 are domain I, interacts with DnaA modulators. A domain II region spans residues Tyr71–Glu112. Residues Gln113–Ser329 form a domain III, AAA+ region region. Residues Gly157, Gly159, Lys160, and Thr161 each contribute to the ATP site. Residues Lys330 to Gln451 form a domain IV, binds dsDNA region.

This sequence belongs to the DnaA family. Oligomerizes as a right-handed, spiral filament on DNA at oriC.

The protein resides in the cytoplasm. Functionally, plays an essential role in the initiation and regulation of chromosomal replication. ATP-DnaA binds to the origin of replication (oriC) to initiate formation of the DNA replication initiation complex once per cell cycle. Binds the DnaA box (a 9 base pair repeat at the origin) and separates the double-stranded (ds)DNA. Forms a right-handed helical filament on oriC DNA; dsDNA binds to the exterior of the filament while single-stranded (ss)DNA is stabiized in the filament's interior. The ATP-DnaA-oriC complex binds and stabilizes one strand of the AT-rich DNA unwinding element (DUE), permitting loading of DNA polymerase. After initiation quickly degrades to an ADP-DnaA complex that is not apt for DNA replication. Binds acidic phospholipids. The chain is Chromosomal replication initiator protein DnaA from Staphylococcus epidermidis (strain ATCC 35984 / DSM 28319 / BCRC 17069 / CCUG 31568 / BM 3577 / RP62A).